The following is a 206-amino-acid chain: Small ribosomal subunit protein uS4 (206 aa).

One can recognise an S4 RNA-binding domain in the interval 96 to 156 (GRLDNVVYRM…EKSKKQARIK (61 aa)).

This sequence belongs to the universal ribosomal protein uS4 family. In terms of assembly, part of the 30S ribosomal subunit. Contacts protein S5. The interaction surface between S4 and S5 is involved in control of translational fidelity.

In terms of biological role, one of the primary rRNA binding proteins, it binds directly to 16S rRNA where it nucleates assembly of the body of the 30S subunit. Its function is as follows. With S5 and S12 plays an important role in translational accuracy. This Actinobacillus succinogenes (strain ATCC 55618 / DSM 22257 / CCUG 43843 / 130Z) protein is Small ribosomal subunit protein uS4.